Reading from the N-terminus, the 143-residue chain is Hemoglobin subunit alpha (143 aa).

S2 bears the N-acetylserine mark. Residues 2–143 (SLSDKDKAAV…LALALSEKYR (142 aa)) form the Globin domain. H60 is a binding site for O2. Heme b is bound at residue H89.

This sequence belongs to the globin family. In terms of assembly, heterotetramer of two alpha chains and two beta chains. As to expression, red blood cells.

Its function is as follows. Involved in oxygen transport from gills to the various peripheral tissues. The protein is Hemoglobin subunit alpha (hba) of Cyprinus carpio (Common carp).